Reading from the N-terminus, the 140-residue chain is Large ribosomal subunit protein uL14 (140 aa).

A Phosphoserine modification is found at Ser-17. Tyr-38 bears the Phosphotyrosine mark.

It belongs to the universal ribosomal protein uL14 family. Component of the large ribosomal subunit.

It is found in the cytoplasm. Component of the large ribosomal subunit. The ribosome is a large ribonucleoprotein complex responsible for the synthesis of proteins in the cell. This Pongo abelii (Sumatran orangutan) protein is Large ribosomal subunit protein uL14 (RPL23).